We begin with the raw amino-acid sequence, 230 residues long: UPF0758 protein Glov_0523 (230 aa).

The 123-residue stretch at 108-230 (RFTSPAQVFD…YFSFVESGLL (123 aa)) folds into the MPN domain. Zn(2+)-binding residues include H179, H181, and D192. Residues 179–192 (HNHPSGDPAPSRED) carry the JAMM motif motif.

Belongs to the UPF0758 family.

In Trichlorobacter lovleyi (strain ATCC BAA-1151 / DSM 17278 / SZ) (Geobacter lovleyi), this protein is UPF0758 protein Glov_0523.